Here is a 302-residue protein sequence, read N- to C-terminus: Probable 2-(5''-triphosphoribosyl)-3'-dephosphocoenzyme-A synthase 1 (302 aa).

It belongs to the CitG/MdcB family.

The enzyme catalyses 3'-dephospho-CoA + ATP = 2'-(5''-triphospho-alpha-D-ribosyl)-3'-dephospho-CoA + adenine. The polypeptide is Probable 2-(5''-triphosphoribosyl)-3'-dephosphocoenzyme-A synthase 1 (Salmonella typhi).